A 1334-amino-acid chain; its full sequence is Aldehyde oxidase 4 (1334 aa).

A 2Fe-2S ferredoxin-type domain is found at 6-93; it reads DELIFFVNGK…GAAVTTVEGV (88 aa). [2Fe-2S] cluster is bound by residues cysteine 45, cysteine 50, cysteine 53, and cysteine 75. Glutamine 114 is a Mo-molybdopterin binding site. Cysteine 115, cysteine 118, cysteine 150, and cysteine 152 together coordinate [2Fe-2S] cluster. A Mo-molybdopterin-binding site is contributed by cysteine 152. An FAD-binding PCMH-type domain is found at 235-421; the sequence is FQGERTIWIM…LSVFIPYSGQ (187 aa). FAD contacts are provided by residues 263–270, alanine 345, threonine 354, histidine 358, aspartate 367, and alanine 411; that span reads LVMGNTAV. Mo-molybdopterin is bound by residues alanine 802, 802–803, leucine 1043, 1084–1087, glutamine 1199, and leucine 1263; these read AF and GSMG. The active-site Proton acceptor; for azaheterocycle hydroxylase activity is the glutamate 1265.

It belongs to the xanthine dehydrogenase family. Homodimer. Requires [2Fe-2S] cluster as cofactor. The cofactor is FAD. It depends on Mo-molybdopterin as a cofactor.

It is found in the cytoplasm. The catalysed reaction is an aldehyde + O2 + H2O = a carboxylate + H2O2 + H(+). It catalyses the reaction retinal + O2 + H2O = retinoate + H2O2 + H(+). Its function is as follows. Aldehyde oxidase able to catalyze the oxidation of retinaldehyde into retinoate. Acts as a negative modulator of the epidermal trophism. May be able to oxidize a wide variety of aldehydes into their corresponding carboxylates and to hydroxylate azaheterocycles. The chain is Aldehyde oxidase 4 (Aox4) from Rattus norvegicus (Rat).